The primary structure comprises 245 residues: Probable transcriptional regulatory protein MARTH_orf271 (245 aa).

The protein belongs to the TACO1 family.

The protein localises to the cytoplasm. This Metamycoplasma arthritidis (strain 158L3-1) (Mycoplasma arthritidis) protein is Probable transcriptional regulatory protein MARTH_orf271.